Consider the following 560-residue polypeptide: DNA ligase B (560 aa).

Catalysis depends on K124, which acts as the N6-AMP-lysine intermediate.

Belongs to the NAD-dependent DNA ligase family. LigB subfamily.

The enzyme catalyses NAD(+) + (deoxyribonucleotide)n-3'-hydroxyl + 5'-phospho-(deoxyribonucleotide)m = (deoxyribonucleotide)n+m + AMP + beta-nicotinamide D-nucleotide.. Catalyzes the formation of phosphodiester linkages between 5'-phosphoryl and 3'-hydroxyl groups in double-stranded DNA using NAD as a coenzyme and as the energy source for the reaction. The chain is DNA ligase B from Escherichia coli O6:H1 (strain CFT073 / ATCC 700928 / UPEC).